The following is a 1245-amino-acid chain: ATP-dependent helicase/nuclease subunit A (1245 aa).

A UvrD-like helicase ATP-binding domain is found at 4-477; the sequence is TKWTDEQLSA…IQLYKNFRSR (474 aa). ATP is bound at residue 25–32; the sequence is AAAGSGKT. Positions 517–815 constitute a UvrD-like helicase C-terminal domain; sequence KFKDTIVGGP…RIMSIHKSKG (299 aa).

The protein belongs to the helicase family. AddA subfamily. In terms of assembly, heterodimer of AddA and AddB/RexB. It depends on Mg(2+) as a cofactor.

It carries out the reaction Couples ATP hydrolysis with the unwinding of duplex DNA by translocating in the 3'-5' direction.. The catalysed reaction is ATP + H2O = ADP + phosphate + H(+). Functionally, the heterodimer acts as both an ATP-dependent DNA helicase and an ATP-dependent, dual-direction single-stranded exonuclease. Recognizes the chi site generating a DNA molecule suitable for the initiation of homologous recombination. The AddA nuclease domain is required for chi fragment generation; this subunit has the helicase and 3' -&gt; 5' nuclease activities. This chain is ATP-dependent helicase/nuclease subunit A, found in Clostridium beijerinckii (strain ATCC 51743 / NCIMB 8052) (Clostridium acetobutylicum).